Consider the following 166-residue polypeptide: Regulatory protein RecX (166 aa).

This sequence belongs to the RecX family.

It localises to the cytoplasm. Modulates RecA activity. This is Regulatory protein RecX from Klebsiella pneumoniae subsp. pneumoniae (strain ATCC 700721 / MGH 78578).